Here is a 424-residue protein sequence, read N- to C-terminus: Protein shisa-9 (424 aa).

Positions 1-23 are cleaved as a signal peptide; it reads MRRVLRLLLGCFLTELCARMCRA. At 24–149 the chain is on the extracellular side; sequence QERSGHGQLA…DPLHDPTKDK (126 aa). Residues N45, N89, and N116 are each glycosylated (N-linked (GlcNAc...) asparagine). A helical transmembrane segment spans residues 150–170; that stretch reads TNLIVYIICGVVAVMVLVGIF. Over 171 to 424 the chain is Cytoplasmic; that stretch reads TKLGLEKAHR…ITNSKTEVTV (254 aa). Disordered regions lie at residues 333-373 and 389-424; these read PRAF…TWDP and LGIA…EVTV. Composition is skewed to polar residues over residues 362-373 and 402-424; these read YNSTANFKTWDP and TRTQ…EVTV.

The protein belongs to the shisa family. SHISA9 subfamily. In terms of assembly, component of some AMPA receptors (ionotropic glutamate receptors) complex, at least composed of some AMPA receptor (GRIA1, GRIA2 and/or GRIA3), CACNG2 and SHISA9, as well as low level of DLG4. Brain-specific. Mainly expressed in neurons, including in hippocampus, cerebral cortex, striatum, thalamus, olfactory bulb and cerebellum. Expressed in most brain structures during embryonic and postnatal development.

The protein resides in the cell projection. It is found in the dendritic spine membrane. Its subcellular location is the synapse. Its function is as follows. Regulator of short-term neuronal synaptic plasticity in the dentate gyrus. Associates with AMPA receptors (ionotropic glutamate receptors) in synaptic spines and promotes AMPA receptor desensitization at excitatory synapses. The polypeptide is Protein shisa-9 (Shisa9) (Mus musculus (Mouse)).